Reading from the N-terminus, the 413-residue chain is MQKRVVILLLDSFGIGASEDAKDFGDLGANTLGNIAKACFNNLADSNDRNGVLKLPNLEGLGLGLSALKAANELPLGFQLKPNLIGAYAYAKELSSAKDTISGHWEMMGAPVLFEWGYFKDKNDSFPKEILDEIMHKTKIKGYLGNCHASGTEIIKDLGEKHLETLYPIFYTSADSVFQIAAHEERFGLDHLYALCEEAFQILEPLKIARVIARPFIGTNRENFKRTANRKDYAIKPHKKLLFETFIEEKQGEVISIGKIADIYAHVGITQKFKAGSLMELCDVTLDQVKNAPNNSLIFTNFVHFDSDYGHRRDVSGYANALEYFDARLKEVLDNLRENDLLILCADHGCDPSFKGTDHTREYIPVLFYHKDLQPAFLGKSETFADIGQSIAYFLGLSPLDYGKNLLNFKGQP.

Mn(2+) contacts are provided by aspartate 11, aspartate 306, histidine 311, aspartate 347, histidine 348, and histidine 359.

Belongs to the phosphopentomutase family. Requires Mn(2+) as cofactor.

The protein localises to the cytoplasm. It carries out the reaction 2-deoxy-alpha-D-ribose 1-phosphate = 2-deoxy-D-ribose 5-phosphate. It catalyses the reaction alpha-D-ribose 1-phosphate = D-ribose 5-phosphate. The protein operates within carbohydrate degradation; 2-deoxy-D-ribose 1-phosphate degradation; D-glyceraldehyde 3-phosphate and acetaldehyde from 2-deoxy-alpha-D-ribose 1-phosphate: step 1/2. In terms of biological role, isomerase that catalyzes the conversion of deoxy-ribose 1-phosphate (dRib-1-P) and ribose 1-phosphate (Rib-1-P) to deoxy-ribose 5-phosphate (dRib-5-P) and ribose 5-phosphate (Rib-5-P), respectively. The polypeptide is Phosphopentomutase (Helicobacter pylori (strain J99 / ATCC 700824) (Campylobacter pylori J99)).